The following is a 341-amino-acid chain: Paired box protein Pax-9 (341 aa).

A DNA-binding region (paired) is located at residues 4–130 (AFGEVNQLGG…SSISRILRNK (127 aa)). The interval 7–63 (EVNQLGGVFVNGRPLPNAIRLRIVELAQLGIRPCDISRQLRVSHGCVSKILARYNET) is PAI subdomain. The tract at residues 82–130 (TVVKHIRTYKQRDPGIFAWEIRDRLLADGVCDKYNVPSVSSISRILRNK) is RED subdomain. The interval 168-189 (AAAAKVPTPPGVPAIPGSVAMP) is interaction with KDM5B.

As to quaternary structure, interacts with KDM5B.

It localises to the nucleus. Functionally, transcription factor required for normal development of thymus, parathyroid glands, ultimobranchial bodies, teeth, skeletal elements of skull and larynx as well as distal limbs. This is Paired box protein Pax-9 (PAX9) from Propithecus coquereli (Coquerel's sifaka).